A 280-amino-acid chain; its full sequence is Shikimate dehydrogenase (NADP(+)) (280 aa).

Shikimate contacts are provided by residues 18-20 (SRS) and Thr65. The Proton acceptor role is filled by Lys69. The shikimate site is built by Asn90 and Asp105. NADP(+)-binding positions include 131 to 135 (GAGGA), 154 to 159 (NRTRAR), and Ile219. Position 221 (Tyr221) interacts with shikimate. Residue Gly242 participates in NADP(+) binding.

This sequence belongs to the shikimate dehydrogenase family. As to quaternary structure, homodimer.

It catalyses the reaction shikimate + NADP(+) = 3-dehydroshikimate + NADPH + H(+). Its pathway is metabolic intermediate biosynthesis; chorismate biosynthesis; chorismate from D-erythrose 4-phosphate and phosphoenolpyruvate: step 4/7. Functionally, involved in the biosynthesis of the chorismate, which leads to the biosynthesis of aromatic amino acids. Catalyzes the reversible NADPH linked reduction of 3-dehydroshikimate (DHSA) to yield shikimate (SA). The polypeptide is Shikimate dehydrogenase (NADP(+)) (Methylocella silvestris (strain DSM 15510 / CIP 108128 / LMG 27833 / NCIMB 13906 / BL2)).